Here is a 242-residue protein sequence, read N- to C-terminus: Biosynthetic peptidoglycan transglycosylase (242 aa).

A helical membrane pass occupies residues 21–41 (VALVVFWGGGIALFSVVPVPF).

This sequence belongs to the glycosyltransferase 51 family.

The protein localises to the cell inner membrane. It carries out the reaction [GlcNAc-(1-&gt;4)-Mur2Ac(oyl-L-Ala-gamma-D-Glu-L-Lys-D-Ala-D-Ala)](n)-di-trans,octa-cis-undecaprenyl diphosphate + beta-D-GlcNAc-(1-&gt;4)-Mur2Ac(oyl-L-Ala-gamma-D-Glu-L-Lys-D-Ala-D-Ala)-di-trans,octa-cis-undecaprenyl diphosphate = [GlcNAc-(1-&gt;4)-Mur2Ac(oyl-L-Ala-gamma-D-Glu-L-Lys-D-Ala-D-Ala)](n+1)-di-trans,octa-cis-undecaprenyl diphosphate + di-trans,octa-cis-undecaprenyl diphosphate + H(+). It functions in the pathway cell wall biogenesis; peptidoglycan biosynthesis. Its function is as follows. Peptidoglycan polymerase that catalyzes glycan chain elongation from lipid-linked precursors. The protein is Biosynthetic peptidoglycan transglycosylase of Salmonella arizonae (strain ATCC BAA-731 / CDC346-86 / RSK2980).